Here is a 274-residue protein sequence, read N- to C-terminus: NAD(P)H dehydrogenase [quinone] 1 (274 aa).

Ala-2 carries the N-acetylalanine modification. FAD is bound by residues His-12, 18–19 (FN), and Gln-67. Ser-82 carries the phosphoserine modification. Residue 104 to 107 (LYWF) coordinates FAD. 126 to 128 (AYT) serves as a coordination point for substrate. Residues 148-151 (TTGG), Tyr-156, and Arg-201 each bind FAD. Residues 225–274 (PSSLFDLNFQAGFLLKKEVQEEQKKNKFGLSVGHHLGKSIPADNQIKARK) form an important for apoenzyme conformational stability region. Lys-251 is covalently cross-linked (Glycyl lysine isopeptide (Lys-Gly) (interchain with G-Cter in SUMO2)).

The protein belongs to the NAD(P)H dehydrogenase (quinone) family. In terms of assembly, homodimer. Interacts with PDLIM4 isoform 2; this interaction stabilizes PDLIM4 isoform 2 in response to oxidative stress and protects it from ubiquitin-independent degradation by the core 20S proteasome. Interacts with TP73 (via SAM domain); this interaction is NADH-dependent, stabilizes TP73 in response to oxidative stress and protects it from ubiquitin-independent degradation by the 20S proteasome. Interacts with TP53; this interaction is NADH-dependent, stabilizes TP53 in response to oxidative stress and protects it from ubiquitin-independent degradation by the 20S proteasome. Requires FAD as cofactor.

It is found in the cytoplasm. The protein localises to the cytosol. It catalyses the reaction a quinone + NADH + H(+) = a quinol + NAD(+). The enzyme catalyses a quinone + NADPH + H(+) = a quinol + NADP(+). It carries out the reaction ubiquinone-10 + NADH + H(+) = ubiquinol-10 + NAD(+). The catalysed reaction is menadione + NADH + H(+) = menadiol + NAD(+). Flavin-containing quinone reductase that catalyzes two-electron reduction of quinones to hydroquinones using either NADH or NADPH as electron donors. In a ping-pong kinetic mechanism, the electrons are sequentially transferred from NAD(P)H to flavin cofactor and then from reduced flavin to the quinone, bypassing the formation of semiquinone and reactive oxygen species. Regulates cellular redox state primarily through quinone detoxification. Reduces components of plasma membrane redox system such as coenzyme Q and vitamin quinones, producing antioxidant hydroquinone forms. In the process may function as superoxide scavenger to prevent hydroquinone oxidation and facilitate excretion. Alternatively, can activate quinones and their derivatives by generating redox reactive hydroquinones with DNA cross-linking antitumor potential. Acts as a gatekeeper of the core 20S proteasome known to degrade proteins with unstructured regions. Upon oxidative stress, interacts with tumor suppressors TP53 and TP73 in a NADH-dependent way and inhibits their ubiquitin-independent degradation by the 20S proteasome. This chain is NAD(P)H dehydrogenase [quinone] 1 (Nqo1), found in Rattus norvegicus (Rat).